Here is a 782-residue protein sequence, read N- to C-terminus: Endonuclease MutS2 (782 aa).

Residue 336 to 343 (GPNTGGKT) coordinates ATP. One can recognise a Smr domain in the interval 707-782 (LDLRGYRYED…GFGVTVATLK (76 aa)).

This sequence belongs to the DNA mismatch repair MutS family. MutS2 subfamily. As to quaternary structure, homodimer. Binds to stalled ribosomes, contacting rRNA.

Functionally, endonuclease that is involved in the suppression of homologous recombination and thus may have a key role in the control of bacterial genetic diversity. Its function is as follows. Acts as a ribosome collision sensor, splitting the ribosome into its 2 subunits. Detects stalled/collided 70S ribosomes which it binds and splits by an ATP-hydrolysis driven conformational change. Acts upstream of the ribosome quality control system (RQC), a ribosome-associated complex that mediates the extraction of incompletely synthesized nascent chains from stalled ribosomes and their subsequent degradation. Probably generates substrates for RQC. This chain is Endonuclease MutS2, found in Staphylococcus aureus (strain MRSA252).